A 66-amino-acid chain; its full sequence is Ribosome biogenesis protein Nop10 (66 aa).

It belongs to the NOP10 family.

In terms of biological role, involved in ribosome biogenesis; more specifically in 18S rRNA pseudouridylation and in cleavage of pre-rRNA. The polypeptide is Ribosome biogenesis protein Nop10 (Desulfurococcus amylolyticus (strain DSM 18924 / JCM 16383 / VKM B-2413 / 1221n) (Desulfurococcus kamchatkensis)).